A 473-amino-acid chain; its full sequence is Photosystem II CP43 reaction center protein (473 aa).

Positions 1 to 14 are excised as a propeptide; it reads MKILYSQRRFYPVE. Position 15 is an N-acetylthreonine (T15). Position 15 is a phosphothreonine (T15). A run of 5 helical transmembrane segments spans residues 69–93, 134–155, 178–200, 255–275, and 291–312; these read LFEVAHFVPEKPMYEQGLILLPHLA, LIGPETLEESFPFFGYVWKDKN, KALYFGGIYDTWAPGGGDVRKIT, KPFAWARRALVWSGEAYLSYS, and WFNNTAYPSEFYGPTGPEASQA. E367 provides a ligand contact to [CaMn4O5] cluster. Residues 447-471 traverse the membrane as a helical segment; sequence RARAAAAGFEKGIDRDFEPVLSMTP.

Belongs to the PsbB/PsbC family. PsbC subfamily. As to quaternary structure, PSII is composed of 1 copy each of membrane proteins PsbA, PsbB, PsbC, PsbD, PsbE, PsbF, PsbH, PsbI, PsbJ, PsbK, PsbL, PsbM, PsbT, PsbX, PsbY, PsbZ, Psb30/Ycf12, at least 3 peripheral proteins of the oxygen-evolving complex and a large number of cofactors. It forms dimeric complexes. It depends on Binds multiple chlorophylls and provides some of the ligands for the Ca-4Mn-5O cluster of the oxygen-evolving complex. It may also provide a ligand for a Cl- that is required for oxygen evolution. PSII binds additional chlorophylls, carotenoids and specific lipids. as a cofactor. Phosphorylated on threonine residue(s).

Its subcellular location is the plastid. The protein localises to the chloroplast thylakoid membrane. One of the components of the core complex of photosystem II (PSII). It binds chlorophyll and helps catalyze the primary light-induced photochemical processes of PSII. PSII is a light-driven water:plastoquinone oxidoreductase, using light energy to abstract electrons from H(2)O, generating O(2) and a proton gradient subsequently used for ATP formation. This Marchantia polymorpha (Common liverwort) protein is Photosystem II CP43 reaction center protein.